Reading from the N-terminus, the 557-residue chain is Formate--tetrahydrofolate ligase (557 aa).

65-72 (SPAGEGKT) lines the ATP pocket.

This sequence belongs to the formate--tetrahydrofolate ligase family.

It carries out the reaction (6S)-5,6,7,8-tetrahydrofolate + formate + ATP = (6R)-10-formyltetrahydrofolate + ADP + phosphate. It functions in the pathway one-carbon metabolism; tetrahydrofolate interconversion. The sequence is that of Formate--tetrahydrofolate ligase from Methylobacillus flagellatus (strain ATCC 51484 / DSM 6875 / VKM B-1610 / KT).